Consider the following 102-residue polypeptide: Small ribosomal subunit protein uS10 (102 aa).

This sequence belongs to the universal ribosomal protein uS10 family. In terms of assembly, part of the 30S ribosomal subunit.

Its function is as follows. Involved in the binding of tRNA to the ribosomes. The sequence is that of Small ribosomal subunit protein uS10 from Rhizobium etli (strain CIAT 652).